Here is a 144-residue protein sequence, read N- to C-terminus: MARIIVLIVAFMALIAGVFATEEKLAKLQIGILKKISPEECTQKARKGDTVSVHYTGKLEDGTVFDSSVERGQPIQFPLGTGRVIPGWDQGILGMCVGEKRKLTIPPHLAYGKQGAGRVIPPDSTLIFTTELVSIDNDGDRDEL.

Positions 1–20 are cleaved as a signal peptide; sequence MARIIVLIVAFMALIAGVFA. The PPIase FKBP-type domain occupies 48 to 136; it reads GDTVSVHYTG…IFTTELVSID (89 aa). A Prevents secretion from ER motif is present at residues 141–144; it reads RDEL.

The protein belongs to the FKBP-type PPIase family. FKBP2 subfamily.

The protein localises to the endoplasmic reticulum. The enzyme catalyses [protein]-peptidylproline (omega=180) = [protein]-peptidylproline (omega=0). Its activity is regulated as follows. Inhibited by both FK506 and rapamycin. Functionally, PPIases accelerate the folding of proteins. It catalyzes the cis-trans isomerization of proline imidic peptide bonds in oligopeptides. In Yarrowia lipolytica (strain CLIB 122 / E 150) (Yeast), this protein is FK506-binding protein 2 (FPR2).